The following is an 858-amino-acid chain: Putative glutamate--cysteine ligase 2-3 (858 aa).

A carboxylate-amine ligase region spans residues 1 to 372 (MSDARNVAVG…RDVPPAGASL (372 aa)). A unknown region spans residues 373–858 (GVAPAVSAPD…GSKDTWIPRR (486 aa)).

This sequence in the N-terminal section; belongs to the glutamate--cysteine ligase type 2 family. YbdK subfamily.

It catalyses the reaction L-cysteine + L-glutamate + ATP = gamma-L-glutamyl-L-cysteine + ADP + phosphate + H(+). Its function is as follows. ATP-dependent carboxylate-amine ligase which exhibits weak glutamate--cysteine ligase activity. The chain is Putative glutamate--cysteine ligase 2-3 from Frankia alni (strain DSM 45986 / CECT 9034 / ACN14a).